Here is a 278-residue protein sequence, read N- to C-terminus: Digeranylgeranylglyceryl phosphate synthase (278 aa).

A run of 8 helical transmembrane segments spans residues 12-32 (LKNC…ASYF), 34-54 (LATV…CGFG), 91-111 (LLVF…LMAV), 129-149 (IIGN…GGIA), 153-173 (IDVT…REII), 204-224 (FLLV…FFGI), 225-245 (YYML…YNLV), and 257-277 (SRNI…GSLF).

It belongs to the UbiA prenyltransferase family. DGGGP synthase subfamily. Requires Mg(2+) as cofactor.

It localises to the cell membrane. The catalysed reaction is sn-3-O-(geranylgeranyl)glycerol 1-phosphate + (2E,6E,10E)-geranylgeranyl diphosphate = 2,3-bis-O-(geranylgeranyl)-sn-glycerol 1-phosphate + diphosphate. The protein operates within membrane lipid metabolism; glycerophospholipid metabolism. Its function is as follows. Prenyltransferase that catalyzes the transfer of the geranylgeranyl moiety of geranylgeranyl diphosphate (GGPP) to the C2 hydroxyl of (S)-3-O-geranylgeranylglyceryl phosphate (GGGP). This reaction is the second ether-bond-formation step in the biosynthesis of archaeal membrane lipids. This chain is Digeranylgeranylglyceryl phosphate synthase, found in Methanococcus maripaludis (strain C7 / ATCC BAA-1331).